An 823-amino-acid polypeptide reads, in one-letter code: Ankyrin repeat domain-containing protein 20A1 (823 aa).

5 ANK repeats span residues Gln66–Val95, Glu99–Leu128, Tyr132–Ala161, Asp165–Ala194, and Leu198–Ala227. 2 disordered regions span residues Val301–Asp343 and Val355–Asn402. The segment covering Gln372–Gln384 has biased composition (basic and acidic residues). Coiled-coil stretches lie at residues Lys431–Glu480, Glu565–Thr724, and Leu776–Glu805.

The chain is Ankyrin repeat domain-containing protein 20A1 (ANKRD20A1) from Homo sapiens (Human).